Reading from the N-terminus, the 230-residue chain is Protein RESPONSE TO ABA AND SALT 1 (230 aa).

The DOG1 domain maps to 7-230 (SQSFTIFVDG…RLRDRDQERA (224 aa)).

Functionally, negative regulator of salt (NaCl) tolerance probably by enhancing abscisic acid (ABA) sensitivity. The protein is Protein RESPONSE TO ABA AND SALT 1 of Arabidopsis thaliana (Mouse-ear cress).